The following is a 545-amino-acid chain: Chaperonin GroEL 2 (545 aa).

Residues 30 to 33, K51, 87 to 91, G415, and D496 contribute to the ATP site; these read TLGP and DGTTT.

The protein belongs to the chaperonin (HSP60) family. Forms a cylinder of 14 subunits composed of two heptameric rings stacked back-to-back. Interacts with the co-chaperonin GroES.

It localises to the cytoplasm. It catalyses the reaction ATP + H2O + a folded polypeptide = ADP + phosphate + an unfolded polypeptide.. In terms of biological role, together with its co-chaperonin GroES, plays an essential role in assisting protein folding. The GroEL-GroES system forms a nano-cage that allows encapsulation of the non-native substrate proteins and provides a physical environment optimized to promote and accelerate protein folding. The chain is Chaperonin GroEL 2 from Nitrobacter winogradskyi (strain ATCC 25391 / DSM 10237 / CIP 104748 / NCIMB 11846 / Nb-255).